The following is a 105-amino-acid chain: uncharacterized protein (105 aa).

The interval 1 to 27 (MQSPAMKRIKSSSHSRWDGSGSVNEMP) is disordered.

Its subcellular location is the mitochondrion. This is an uncharacterized protein from Arabidopsis thaliana (Mouse-ear cress).